The following is a 343-amino-acid chain: Hydroxycarboxylic acid receptor 1 (343 aa).

The Extracellular portion of the chain corresponds to methionine 1–leucine 21. Asparagine 3 carries an N-linked (GlcNAc...) asparagine glycan. Residues leucine 22–phenylalanine 42 form a helical membrane-spanning segment. Topologically, residues histidine 43–serine 49 are cytoplasmic. The chain crosses the membrane as a helical span at residues serine 50–leucine 70. Over arginine 71–leucine 90 the chain is Extracellular. Residues cysteine 88 and cysteine 165 are joined by a disulfide bond. The helical transmembrane segment at valine 91–valine 111 threads the bilayer. The Cytoplasmic portion of the chain corresponds to aspartate 112–threonine 131. The helical transmembrane segment at alanine 132–methionine 152 threads the bilayer. Topologically, residues glutamate 153–glutamine 182 are extracellular. Residues leucine 183–leucine 203 form a helical membrane-spanning segment. The Cytoplasmic segment spans residues arginine 204–arginine 220. Residues phenylalanine 221 to leucine 241 traverse the membrane as a helical segment. The Extracellular segment spans residues tyrosine 242 to alanine 259. The chain crosses the membrane as a helical span at residues leucine 260–phenylalanine 280. Residues serine 281–cysteine 343 are Cytoplasmic-facing. The span at cysteine 319–serine 334 shows a compositional bias: polar residues. Positions cysteine 319–cysteine 343 are disordered.

It belongs to the G-protein coupled receptor 1 family. As to expression, highly expressed in subcutaneous fat and omental fat and detectable in lower levels in brain and many other tissues. High levels detected in epididymal and subcutaneous fat with slightly lower in omental fat, low levels are detected in the brain, skeletal muscle, kidney, liver and the pancreas (at protein level).

The protein resides in the cell membrane. Acts as a receptor for L-lactate and mediates its anti-lipolytic effect through a G(i)-protein-mediated pathway. This chain is Hydroxycarboxylic acid receptor 1 (Hcar1), found in Mus musculus (Mouse).